We begin with the raw amino-acid sequence, 313 residues long: UPF0761 membrane protein VS_0126 (313 aa).

6 consecutive transmembrane segments (helical) span residues 41-61 (YLAYITLLSIVPMLTVLLSIL), 104-124 (MTAVGSVFLFIAALMLISNID), 139-159 (AVLSFSMYWMVLTLGPILIGA), 185-205 (VIRKLPLITSFFAFFGLYLLV), 217-237 (AGSLVAALLFELSKKGFAAYI), and 249-269 (ALAAIPILFVWVYLCWLIVLV). Positions 281-290 (EQWSDSQEMV) are enriched in polar residues. A disordered region spans residues 281–313 (EQWSDSQEMVHSSDKDKITEQGNNSDSTDPESK).

It belongs to the UPF0761 family.

The protein localises to the cell inner membrane. The chain is UPF0761 membrane protein VS_0126 from Vibrio atlanticus (strain LGP32) (Vibrio splendidus (strain Mel32)).